The sequence spans 811 residues: Glycerol-3-phosphate acyltransferase (811 aa).

Residues 308–313 carry the HXXXXD motif motif; the sequence is CHRSHM.

Belongs to the GPAT/DAPAT family.

The protein localises to the cell inner membrane. The enzyme catalyses sn-glycerol 3-phosphate + an acyl-CoA = a 1-acyl-sn-glycero-3-phosphate + CoA. It functions in the pathway phospholipid metabolism; CDP-diacylglycerol biosynthesis; CDP-diacylglycerol from sn-glycerol 3-phosphate: step 1/3. In Pseudoalteromonas atlantica (strain T6c / ATCC BAA-1087), this protein is Glycerol-3-phosphate acyltransferase.